Here is a 22-residue protein sequence, read N- to C-terminus: uncharacterized protein (22 aa).

The segment at 1-22 (MHNSIAYDKDGNSTGQKYYAYG) is disordered.

This is an uncharacterized protein from Lactobacillus helveticus (Lactobacillus suntoryeus).